The primary structure comprises 205 residues: Small ribosomal subunit protein uS5 (205 aa).

The 64-residue stretch at 49 to 112 folds into the S5 DRBM domain; the sequence is LVDEVLCIDM…TNAKLNIVKV (64 aa).

It belongs to the universal ribosomal protein uS5 family. Part of the 30S ribosomal subunit. Contacts protein S4.

Functionally, with S4 and S12 plays an important role in translational accuracy. This chain is Small ribosomal subunit protein uS5, found in Methanocorpusculum labreanum (strain ATCC 43576 / DSM 4855 / Z).